The following is a 212-amino-acid chain: Suppressor of cytokine signaling 1 (212 aa).

A disordered region spans residues 1–55; that stretch reads MVARNQVAADNAISPAAEPRRRSEPSSSSSSSSPAAPVRPRPCPAVPAPAPGDTH. Residues 25 to 36 show a composition bias toward low complexity; the sequence is PSSSSSSSSPAA. Residues 37–50 are compositionally biased toward pro residues; that stretch reads PVRPRPCPAVPAPA. A kinase inhibitory region (KIR) region spans residues 56 to 67; sequence FRTFRSHSDYRR. Positions 68–79 are extended SH2 subdomain (ESS); sequence ITRTSALLDACG. The region spanning 80–175 is the SH2 domain; that stretch reads FYWGPLSVHG…PLRQRRVRPL (96 aa). An SOCS box domain is found at 162–211; that stretch reads MLGAPLRQRRVRPLQELCRQRIVAAVGRENLARIPLNPVLRDYLSSFPFQ. Residues 174-183 form an interaction with Elongin BC complex region; sequence PLQELCRQRI.

It belongs to the SOCS1 family. In terms of assembly, interacts with multiple activated proteins of the tyrosine kinase signaling pathway including JAK family kinases, TEC, KIT, GRB2 and VAV. Binding to JAKs is mediated through the KIR and SH2 domain to a phosphorylated tyrosine residue within the JAK JH1 domain. Binds the SH3 domain of GRB2 via diproline determinants in the N-terminus, and the N-terminal regulatory domain of VAV. Interacts with the Elongin BC complex (ELOB and ELOC). Component of an ECS CBC(SOCS1) E3 ubiquitin-protein ligase complex which contains Elongin BC, CUL5, RBX1 and SOCS1. Interacts (via SH2 domain and SOCS box) with TRIM8. Interacts with CUL2. Interacts with AXL and FGFR3. Interacts with INSR. Interacts with TRIM8. Interacts with DCUN1D1. Interacts with IFNGR1. High expression in thymus. Lower expression in lung and spleen. Expressed in both Th1 and Th2 cells.

The protein localises to the nucleus. Its subcellular location is the cytoplasmic vesicle. It functions in the pathway protein modification; protein ubiquitination. Essential negative regulator of type I and type II interferon (IFN) signaling, as well as that of other cytokines, including IL2, IL4, IL6 and leukemia inhibitory factor (LIF). Downregulates cytokine signaling by inhibiting the JAK/STAT signaling pathway. Acts by binding to JAK proteins and to IFNGR1 and inhibiting their kinase activity. In vitro, suppresses Tec protein-tyrosine activity. Regulates IFN-gamma (IFNG)-mediated sensory neuron survival. Probable substrate recognition component of an ECS (Elongin BC-CUL2/5-SOCS-box protein) E3 ubiquitin ligase complex which mediates the ubiquitination and subsequent proteasomal degradation of target proteins. In Mus musculus (Mouse), this protein is Suppressor of cytokine signaling 1.